The sequence spans 130 residues: MSKTIKRIGSRRNEHRVLKGVIYVQASFNNTIVTATDVRGQVLSWSSAGACGFKGTRRGTPFAAQTAAENVIRALMDRGMERVEVMISGPGRGRDTALRTIRRSGILLSFVRDVTPMPHNGCRPPKKRRV.

Belongs to the universal ribosomal protein uS11 family. In terms of assembly, part of the 30S ribosomal subunit.

It localises to the plastid. The protein resides in the chloroplast. The protein is Small ribosomal subunit protein uS11c of Pinus thunbergii (Japanese black pine).